We begin with the raw amino-acid sequence, 356 residues long: S-adenosylmethionine:tRNA ribosyltransferase-isomerase (356 aa).

It belongs to the QueA family. As to quaternary structure, monomer.

The protein localises to the cytoplasm. It catalyses the reaction 7-aminomethyl-7-carbaguanosine(34) in tRNA + S-adenosyl-L-methionine = epoxyqueuosine(34) in tRNA + adenine + L-methionine + 2 H(+). The protein operates within tRNA modification; tRNA-queuosine biosynthesis. Functionally, transfers and isomerizes the ribose moiety from AdoMet to the 7-aminomethyl group of 7-deazaguanine (preQ1-tRNA) to give epoxyqueuosine (oQ-tRNA). The protein is S-adenosylmethionine:tRNA ribosyltransferase-isomerase of Escherichia coli O1:K1 / APEC.